We begin with the raw amino-acid sequence, 585 residues long: Potassium-transporting ATPase potassium-binding subunit (585 aa).

The next 12 helical transmembrane spans lie at 25–45, 84–104, 152–172, 194–214, 275–295, 307–327, 345–365, 368–388, 397–417, 437–457, 502–522, and 547–567; these read IIIF…SFYI, YFIN…LVIM, FVIT…SMAF, IFDL…LAGV, LEFV…GIVF, VIMF…YVGV, AIGV…STGA, GALV…LLLN, GVLN…LMVG, LSLV…LMIP, LDGV…LVIA, and LLLI…IIVL.

It belongs to the KdpA family. As to quaternary structure, the system is composed of three essential subunits: KdpA, KdpB and KdpC.

Its subcellular location is the cell membrane. Part of the high-affinity ATP-driven potassium transport (or Kdp) system, which catalyzes the hydrolysis of ATP coupled with the electrogenic transport of potassium into the cytoplasm. This subunit binds the extracellular potassium ions and delivers the ions to the membrane domain of KdpB through an intramembrane tunnel. This Thermoplasma volcanium (strain ATCC 51530 / DSM 4299 / JCM 9571 / NBRC 15438 / GSS1) protein is Potassium-transporting ATPase potassium-binding subunit.